A 447-amino-acid polypeptide reads, in one-letter code: Na(+)-translocating NADH-quinone reductase subunit A (447 aa).

This sequence belongs to the NqrA family. Composed of six subunits; NqrA, NqrB, NqrC, NqrD, NqrE and NqrF.

It carries out the reaction a ubiquinone + n Na(+)(in) + NADH + H(+) = a ubiquinol + n Na(+)(out) + NAD(+). In terms of biological role, NQR complex catalyzes the reduction of ubiquinone-1 to ubiquinol by two successive reactions, coupled with the transport of Na(+) ions from the cytoplasm to the periplasm. NqrA to NqrE are probably involved in the second step, the conversion of ubisemiquinone to ubiquinol. In Haemophilus influenzae (strain PittGG), this protein is Na(+)-translocating NADH-quinone reductase subunit A.